Here is a 166-residue protein sequence, read N- to C-terminus: MAEVEVRVRQEQVAEFRETFAFFDKDGDGCITLEELDTVVRSLGQTPTREELAEMIRDVDVDGNGTIEFAEFLALMARKASRGGENGGGGDDSGDAADEELREAFKVFDKDQDGLISAAELRHVMISLGEKLTDEEVEQMIREADLDGDGQVNFDEFVRMMMLSDQ.

EF-hand domains follow at residues 11-46 (EQVA…LGQT), 47-82 (PTRE…KASR), 96-131 (AADE…LGEK), and 132-166 (LTDE…LSDQ). Ca(2+)-binding residues include D24, D26, D28, C30, E35, D60, D62, N64, T66, E71, D109, D111, D113, and E120. K131 is modified (N6,N6,N6-trimethyllysine). 5 residues coordinate Ca(2+): D145, D147, D149, Q151, and E156.

The protein belongs to the calmodulin family.

Functionally, potential calcium sensor. The sequence is that of Calmodulin-like protein 5 (CML5) from Oryza sativa subsp. japonica (Rice).